Reading from the N-terminus, the 368-residue chain is tRNA/tmRNA (uracil-C(5))-methyltransferase (368 aa).

Gln192, Tyr220, Asn225, Glu241, and Asp301 together coordinate S-adenosyl-L-methionine. The active-site Nucleophile is Cys326. The Proton acceptor role is filled by Glu360.

Belongs to the class I-like SAM-binding methyltransferase superfamily. RNA M5U methyltransferase family. TrmA subfamily.

The catalysed reaction is uridine(54) in tRNA + S-adenosyl-L-methionine = 5-methyluridine(54) in tRNA + S-adenosyl-L-homocysteine + H(+). It catalyses the reaction uridine(341) in tmRNA + S-adenosyl-L-methionine = 5-methyluridine(341) in tmRNA + S-adenosyl-L-homocysteine + H(+). Its function is as follows. Dual-specificity methyltransferase that catalyzes the formation of 5-methyluridine at position 54 (m5U54) in all tRNAs, and that of position 341 (m5U341) in tmRNA (transfer-mRNA). The chain is tRNA/tmRNA (uracil-C(5))-methyltransferase from Actinobacillus pleuropneumoniae serotype 7 (strain AP76).